Reading from the N-terminus, the 194-residue chain is MHILTAGVDEAGRGPLVGSVFAAAVILPETFDLPGLTDSKKLSEKKRDALAEMIKEQAVAWHVAASTPEEIASLNILHATMLAMKRAVYGLAARPEKIFIDGNRIPEHLGIPAEAVVKGDSKIIEISAASVLAKTARDAEMYALAQRRPQYGFDKHKGYGTKQHLEALKQYGVLPEHRRDFAPVRNLLAQQALF.

Residues I3–L193 form the RNase H type-2 domain. Positions 9, 10, and 101 each coordinate a divalent metal cation.

It belongs to the RNase HII family. Requires Mn(2+) as cofactor. The cofactor is Mg(2+).

It is found in the cytoplasm. It carries out the reaction Endonucleolytic cleavage to 5'-phosphomonoester.. Its function is as follows. Endonuclease that specifically degrades the RNA of RNA-DNA hybrids. This chain is Ribonuclease HII, found in Neisseria gonorrhoeae (strain ATCC 700825 / FA 1090).